The following is a 536-amino-acid chain: Inactive beta-amylase 9 (536 aa).

Serine 47 carries the phosphoserine modification. Residues 511 to 536 (QASEAEVEAETASIGSGTGAPSLQTA) are disordered.

The protein belongs to the glycosyl hydrolase 14 family. As to expression, mostly expressed in young floral buds, flowers and roots, and, to a later extent, in stems and leaves.

It localises to the cytoplasm. The protein is Inactive beta-amylase 9 (BAM9) of Arabidopsis thaliana (Mouse-ear cress).